The chain runs to 86 residues: Short neurotoxin homolog NTL1 (86 aa).

An N-terminal signal peptide occupies residues 1 to 21 (MKTLLLSLVVLTIACLDLGYT). Cystine bridges form between cysteine 24-cysteine 45, cysteine 38-cysteine 62, cysteine 66-cysteine 78, and cysteine 79-cysteine 84.

Expressed by the venom gland.

It localises to the secreted. The protein is Short neurotoxin homolog NTL1 of Bungarus multicinctus (Many-banded krait).